A 187-amino-acid chain; its full sequence is UPF0301 protein YqgE (187 aa).

This sequence belongs to the UPF0301 (AlgH) family.

The polypeptide is UPF0301 protein YqgE (Salmonella choleraesuis (strain SC-B67)).